A 218-amino-acid chain; its full sequence is Large ribosomal subunit protein uL3 (218 aa).

Belongs to the universal ribosomal protein uL3 family. Part of the 50S ribosomal subunit. Forms a cluster with proteins L14 and L19.

Its function is as follows. One of the primary rRNA binding proteins, it binds directly near the 3'-end of the 23S rRNA, where it nucleates assembly of the 50S subunit. The chain is Large ribosomal subunit protein uL3 from Corynebacterium urealyticum (strain ATCC 43042 / DSM 7109).